The following is a 418-amino-acid chain: F420-non-reducing hydrogenase vhu subunit A (418 aa).

Residues Cys-61 and Cys-64 each coordinate Ni(2+).

Belongs to the [NiFe]/[NiFeSe] hydrogenase large subunit family. As to quaternary structure, the F420-non-reducing hydrogenase vhu is composed of four subunits; VhuA, VhuD, VhuG and VhuU. Ni(2+) is required as a cofactor.

This chain is F420-non-reducing hydrogenase vhu subunit A (vhuA), found in Methanocaldococcus jannaschii (strain ATCC 43067 / DSM 2661 / JAL-1 / JCM 10045 / NBRC 100440) (Methanococcus jannaschii).